A 287-amino-acid chain; its full sequence is Putative inactive carboxylesterase 4 (287 aa).

The signal sequence occupies residues 1–18 (MWLPALVLATLAASAAWA). N-linked (GlcNAc...) asparagine glycosylation is present at Asn-80.

The protein belongs to the type-B carboxylesterase/lipase family. In terms of tissue distribution, expressed in placenta.

It localises to the secreted. Functionally, has no esterase activity. This Homo sapiens (Human) protein is Putative inactive carboxylesterase 4 (CES1P1).